The sequence spans 360 residues: Endolytic peptidoglycan transglycosylase RlpA (360 aa).

The first 17 residues, 1–17, serve as a signal peptide directing secretion; it reads MRKEWLWVGIASVLLSA. A lipid anchor (N-palmitoyl cysteine) is attached at Cys18. Cys18 carries S-diacylglycerol cysteine lipidation. The region spanning 283–359 is the SPOR domain; the sequence is SAISGGYVVQ…AQQQSFIVAA (77 aa).

This sequence belongs to the RlpA family.

The protein resides in the cell membrane. In terms of biological role, lytic transglycosylase with a strong preference for naked glycan strands that lack stem peptides. The polypeptide is Endolytic peptidoglycan transglycosylase RlpA (Yersinia pestis).